The following is a 370-amino-acid chain: MSGNTLGLLFTVTTFGESHGPAIGAVVDGCPPGMDLTEADIQGDLDRRKPGTSRHVTQRKEPDQVEILSGVFEGKTTGTPICLLIRNTDQRSKDYGNIVETFRPGHADYTYWQKYGIRDYRGGGRSSARLTAPVVAAGAVAKKWLREQFGTEIRGYMSKLGEIEVPFSDWSHVPENPFFAANADIVPELETYMDALRRDGDSVGARIEVVASNVPVGLGEPLFDRLDADIAHAMMGLNAVKGVEIGAGFKSVEQRGSEHGDELTAQGFRGNNAGGILGGISTGQDITVSLAIKPTSSIRTPRESIDKAGNAATVETFGRHDPCVGIRATPIAEALLALVLVDHALRHRAQCGDVKVDTPRIPAQAPGQPG.

Residues 41–60 are disordered; that stretch reads IQGDLDRRKPGTSRHVTQRK. Arginine 48 and arginine 54 together coordinate NADP(+). FMN-binding positions include 125 to 127, 238 to 239, glycine 278, 293 to 297, and arginine 319; these read RSS, NA, and KPTSS.

Belongs to the chorismate synthase family. As to quaternary structure, homotetramer. FMNH2 is required as a cofactor.

It carries out the reaction 5-O-(1-carboxyvinyl)-3-phosphoshikimate = chorismate + phosphate. It functions in the pathway metabolic intermediate biosynthesis; chorismate biosynthesis; chorismate from D-erythrose 4-phosphate and phosphoenolpyruvate: step 7/7. Functionally, catalyzes the anti-1,4-elimination of the C-3 phosphate and the C-6 proR hydrogen from 5-enolpyruvylshikimate-3-phosphate (EPSP) to yield chorismate, which is the branch point compound that serves as the starting substrate for the three terminal pathways of aromatic amino acid biosynthesis. This reaction introduces a second double bond into the aromatic ring system. This Cupriavidus pinatubonensis (strain JMP 134 / LMG 1197) (Cupriavidus necator (strain JMP 134)) protein is Chorismate synthase.